The following is a 199-amino-acid chain: 3-isopropylmalate dehydratase small subunit (199 aa).

This sequence belongs to the LeuD family. LeuD type 1 subfamily. As to quaternary structure, heterodimer of LeuC and LeuD.

It carries out the reaction (2R,3S)-3-isopropylmalate = (2S)-2-isopropylmalate. It participates in amino-acid biosynthesis; L-leucine biosynthesis; L-leucine from 3-methyl-2-oxobutanoate: step 2/4. Catalyzes the isomerization between 2-isopropylmalate and 3-isopropylmalate, via the formation of 2-isopropylmaleate. The polypeptide is 3-isopropylmalate dehydratase small subunit (Pseudoalteromonas translucida (strain TAC 125)).